A 158-amino-acid chain; its full sequence is Transcription elongation factor GreA (158 aa).

Belongs to the GreA/GreB family.

In terms of biological role, necessary for efficient RNA polymerase transcription elongation past template-encoded arresting sites. The arresting sites in DNA have the property of trapping a certain fraction of elongating RNA polymerases that pass through, resulting in locked ternary complexes. Cleavage of the nascent transcript by cleavage factors such as GreA or GreB allows the resumption of elongation from the new 3'terminus. GreA releases sequences of 2 to 3 nucleotides. The sequence is that of Transcription elongation factor GreA from Methylobacterium sp. (strain 4-46).